Reading from the N-terminus, the 2514-residue chain is Nuclear receptor corepressor 2 (2514 aa).

The segment covering 1-13 (MSGSTQPVAQTWR) has biased composition (polar residues). The segment at 1–24 (MSGSTQPVAQTWRATEPRYPPHSL) is disordered. Residue Arg-18 is modified to Asymmetric dimethylarginine. 4 positions are modified to phosphoserine: Ser-54, Ser-67, Ser-149, and Ser-152. Disordered regions lie at residues 120 to 162 (PSPL…ELEL) and 190 to 220 (ISKL…PPIE). Thr-156 carries the phosphothreonine modification. The stretch at 174-215 (QNMDRVDREITMVEQQISKLKKKQQQLEEEAAKPPEPEKPVS) forms a coiled coil. The span at 203 to 212 (EAAKPPEPEK) shows a compositional bias: basic and acidic residues. Ser-215 carries the post-translational modification Phosphoserine. The tract at residues 254–312 (LPLYNQPSDTRQYHENIKINQAMRKKLILYFKRRNHARKQWEQKFCQRYDQLMEAWEKK) is interaction with SIN3A/B. The deacetylase activation domain (DAD) stretch occupies residues 389–480 (MRQLAVIPPM…YLTKKNENYK (92 aa)). An SANT 1 domain is found at 427–478 (QVMNMWSEQEKETFREKFMQHPKNFGLIASFLERKTVAECVLYYYLTKKNEN). Residues Lys-449, Tyr-470, and Tyr-471 each coordinate 1D-myo-inositol 1,4,5,6-tetrakisphosphate. Disordered regions lie at residues 487-622 (YRRR…EMET), 674-1081 (EKER…APPG), and 1165-1186 (SGVK…SLGV). Ser-493 carries the phosphoserine modification. The segment covering 494-510 (QQQQQQQQQQQQQQQQQ) has biased composition (low complexity). The segment covering 516 to 552 (SQEEKDEKEKEKEAEKEEEKPEVENDKEDLLKEKTDD) has biased composition (basic and acidic residues). Positions 522–561 (EKEKEKEAEKEEEKPEVENDKEDLLKEKTDDTSGEDNDEK) form a coiled coil. Phosphothreonine is present on Thr-553. Ser-554 carries the phosphoserine modification. Polar residues-rich tracts occupy residues 597-613 (TPQQ…NESS) and 740-753 (ATVN…SIPS). The SANT 2 domain occupies 610 to 661 (NESSRWTEEEMETAKKGLLEHGRNWSAIARMVGSKTVSQCKNFYFNYKKRQN). Phosphoserine is present on residues Ser-750 and Ser-753. 2 stretches are compositionally biased toward pro residues: residues 777–796 (GPPP…PTEP) and 806–822 (PTPP…PPVV). Over residues 856–866 (GKAEEPVKSEC) the composition is skewed to basic and acidic residues. The residue at position 878 (Lys-878) is an N6-acetyllysine. The segment covering 902–921 (RATTAKSSGAPQDSDSSATC) has biased composition (polar residues). Positions 937–948 (LLSPRPSLLTPT) are enriched in low complexity. Residue Ser-939 is modified to Phosphoserine. Thr-946 bears the Phosphothreonine mark. A Phosphoserine modification is found at Ser-956. Lys-959 bears the N6-acetyllysine mark. The span at 980–990 (KVHEPPREDAA) shows a compositional bias: basic and acidic residues. Pro residues predominate over residues 993-1004 (KPAPPAPPPPQN). Residues 1005-1014 (LQPESDAPQQ) are compositionally biased toward polar residues. Residue Lys-1168 forms a Glycyl lysine isopeptide (Lys-Gly) (interchain with G-Cter in SUMO2) linkage. Ser-1173 carries the phosphoserine modification. Lys-1210 and Lys-1240 each carry N6-acetyllysine. Ser-1251 carries the post-translational modification Phosphoserine. The interval 1287–1307 (TQCSKEDGRSSSGPPHETAAP) is disordered. Ser-1323 bears the Phosphoserine mark. Thr-1383 is modified (phosphothreonine). Disordered regions lie at residues 1440 to 1482 (PLAP…SPGR) and 1506 to 1609 (ESLK…HPIS). The residue at position 1479 (Ser-1479) is a Phosphoserine. Positions 1513–1526 (GTASSSGGSIARGA) are enriched in low complexity. Residues Ser-1539, Ser-1595, and Ser-1619 each carry the phosphoserine modification. Arg-1653 carries the asymmetric dimethylarginine modification. 2 disordered regions span residues 1763–1867 (TAPQ…TQDA) and 1937–2124 (KEAP…PGVK). A compositionally biased stretch (low complexity) spans 1766 to 1782 (QPFSSRHSSSPLSPGGP). 2 positions are modified to phosphoserine: Ser-1775 and Ser-1778. Residues 1794 to 1813 (SERERDRDRERDRDREREKS) show a composition bias toward basic and acidic residues. A Phosphoserine modification is found at Ser-1861. Basic and acidic residues predominate over residues 1938–1952 (EAPRVARPERPRADT). Lys-1959 bears the N6-acetyllysine mark. Residue Ser-2005 is modified to Phosphoserine. Position 2026 is an N6-acetyllysine (Lys-2026). Positions 2043–2060 (SSYSPEGVEPVSPVSSPS) are enriched in low complexity. Residues Ser-2046, Ser-2054, Ser-2057, Ser-2058, and Ser-2060 each carry the phosphoserine modification. A Phosphothreonine modification is found at Thr-2062. Positions 2062–2085 (THDKGLPKHLEELDKSHLEGELRP) are enriched in basic and acidic residues. Ser-2077 is subject to Phosphoserine. Positions 2106-2117 (LPESQPSSSPLL) are enriched in low complexity. Residues 2128–2131 (RVVT) form a required for interaction with RARA in the absence of its ligand region. Positions 2136 to 2140 (ISEVI) match the CORNR box of ID1 motif. 2 disordered regions span residues 2174 to 2235 (RRPP…GHSR) and 2248 to 2269 (QTEP…PAFF). Phosphoserine occurs at positions 2203, 2223, and 2258. Residues 2339 to 2343 (LEAII) carry the CORNR box of ID2 motif. A disordered region spans residues 2384 to 2500 (DGRSDHTLTS…PHHAWDEEPK (117 aa)). At Ser-2413 the chain carries Phosphoserine. Low complexity predominate over residues 2482 to 2492 (PAGSGPLAGPH).

This sequence belongs to the N-CoR nuclear receptor corepressors family. In terms of assembly, forms a large corepressor complex that contains SIN3A/B and histone deacetylases HDAC1 and HDAC2. This complex associates with the thyroid (TR) and the retinoid acid receptors (RAR) in the absence of ligand, and may stabilize their interaction with TFIIB. Interacts directly with RARA in the absence of ligand; the interaction represses RARA activity. Interacts (isoform SMRT) with HDAC10. Interacts with MINT. Component of the N-Cor repressor complex, at least composed of NCOR1, NCOR2, HDAC3, TBL1X, TBL1R, CORO2A and GPS2. Interacts with CBFA2T3 and ATXN1L. Interacts with RARB; the interaction is weak and does not repress RARB transactivational activity. Interacts (via 1D-myo-inositol 1,4,5,6-tetrakisphosphate) with HDAC3; promoting the histone deacetylase activity of HDAC3. Interacts with HDAC7 and C1D. Interacts with NR4A2; this interaction increases in the absence of PITX3. Interacts with BCL6 (via the BTB domain), required for BCL6 transcriptional repressor activity on a subset of target genes. Forms ternary complexes with BCOR and BCL6 on target gene promoters but, on enhancer elements, interacts with BCL6 and HDAC3 to repress proximal gene expression. May interact with DEAF1. Interacts with RXRA. Interacts with MECP2. Interacts with ZBTB7A. Interacts with AR. Interacts with TBL1Y. Interacts with SANBR (via the BTB domain). As to expression, ubiquitous. High levels of expression are detected in lung, spleen and brain.

The protein localises to the nucleus. Its function is as follows. Transcriptional corepressor that mediates the transcriptional repression activity of some nuclear receptors by promoting chromatin condensation, thus preventing access of the basal transcription. Acts by recruiting chromatin modifiers, such as histone deacetylases HDAC1, HDAC2 and HDAC3. Required to activate the histone deacetylase activity of HDAC3. Involved in the regulation BCL6-dependent of the germinal center (GC) reactions, mainly through the control of the GC B-cells proliferation and survival. Recruited by ZBTB7A to the androgen response elements/ARE on target genes, negatively regulates androgen receptor signaling and androgen-induced cell proliferation. Functionally, isoform 1 and isoform 4 have different affinities for different nuclear receptors. The sequence is that of Nuclear receptor corepressor 2 from Homo sapiens (Human).